A 136-amino-acid chain; its full sequence is Small ribosomal subunit protein bS6 (136 aa).

Over residues 117 to 130 the composition is skewed to basic and acidic residues; it reads EERSRSSRRQREDV. Residues 117-136 form a disordered region; sequence EERSRSSRRQREDVIEGVEL.

Belongs to the bacterial ribosomal protein bS6 family.

Its function is as follows. Binds together with bS18 to 16S ribosomal RNA. The chain is Small ribosomal subunit protein bS6 from Bartonella quintana (strain Toulouse) (Rochalimaea quintana).